Reading from the N-terminus, the 197-residue chain is MTDFILNAQARTDLGKGASRRLRHSLSIPAVVYGGDKEAQSLTILAKEITKLFENEAAFSHVIELNVDGVKQNVIIKAMQRHPAKQFIMHADFVRVVAGQKLTAKVPVHFINEEAPVKKGGEISHVESEIEVSCEAKDLPEFIEVDLGNAEIGTIIHLSDLKAPKGVEFVALAHGDDKAVANVHAPRVAPEAEGAAE.

It belongs to the bacterial ribosomal protein bL25 family. CTC subfamily. In terms of assembly, part of the 50S ribosomal subunit; part of the 5S rRNA/L5/L18/L25 subcomplex. Contacts the 5S rRNA. Binds to the 5S rRNA independently of L5 and L18.

In terms of biological role, this is one of the proteins that binds to the 5S RNA in the ribosome where it forms part of the central protuberance. The sequence is that of Large ribosomal subunit protein bL25 from Pseudomonas putida (strain ATCC 700007 / DSM 6899 / JCM 31910 / BCRC 17059 / LMG 24140 / F1).